Here is a 516-residue protein sequence, read N- to C-terminus: Keratin, type II cuticular Hb2 (516 aa).

The interval 1 to 118 (MSCRNFQLSP…PTVQRVKRDE (118 aa)) is head. The 312-residue stretch at 118–429 (EKEQIKCLNN…RLLEGEEHRL (312 aa)) folds into the IF rod domain. Residues 119-153 (KEQIKCLNNRFASFINKVRFLEQKNKLLETKWNFM) form a coil 1A region. Positions 154-163 (QQQRSCQSNM) are linker 1. The segment at 164–264 (EPLFEGYICA…FEEEIGLLQS (101 aa)) is coil 1B. The linker 12 stretch occupies residues 265 to 281 (QISETSVIVKMDNSREL). Residues 282-425 (DVDGIVAEIK…ATYRRLLEGE (144 aa)) are coil 2. The tail stretch occupies residues 426-516 (EHRLCEGIGP…VGVGSNSCSR (91 aa)).

This sequence belongs to the intermediate filament family. As to quaternary structure, heterotetramer of two type I and two type II keratins.

In Mus musculus (Mouse), this protein is Keratin, type II cuticular Hb2 (Krt82).